We begin with the raw amino-acid sequence, 88 residues long: Pigment dispersing factor homolog pdf-1 (88 aa).

An N-terminal signal peptide occupies residues 1–21 (MNRFIISMIALLAVFCAVSTA).

The protein localises to the secreted. Functionally, probable ligand of isoforms a and b of the calcitonin receptor-like protein, pdfr-1, a G-protein coupled receptor. May not signal through isoform c of pdfr-1. Involved in locomotion; more specifically mate searching behavior of males, independent of nutritional status. Involved in regulating the male-specific expression of TGFbeta-like daf-7 in the ASJ chemosensory neurons. Plays a role in circadian rhythms of locomotor activity. Involved in mediating arousal from the sleep-like state called lethargus, which occurs during molting between larval and adult stages, in part by regulating touch sensitivity, and working in concert with neuropeptide flp-2. In the presence of food, plays a role in initiating and extending exploratory roaming behavior, in opposition to 5-hydroxytryptamine (serotonin) signaling. In Caenorhabditis elegans, this protein is Pigment dispersing factor homolog pdf-1.